The following is a 154-amino-acid chain: Superoxide dismutase [Cu-Zn] (154 aa).

Residues His-45, His-47, and His-62 each coordinate Cu cation. A disulfide bridge links Cys-56 with Cys-146. Zn(2+)-binding residues include His-62, His-70, His-79, and Asp-82. His-120 is a Cu cation binding site.

The protein belongs to the Cu-Zn superoxide dismutase family. Homodimer. Cu cation serves as cofactor. The cofactor is Zn(2+).

The protein resides in the cytoplasm. It catalyses the reaction 2 superoxide + 2 H(+) = H2O2 + O2. Its function is as follows. Destroys radicals which are normally produced within the cells and which are toxic to biological systems. This is Superoxide dismutase [Cu-Zn] from Bombyx mori (Silk moth).